Consider the following 196-residue polypeptide: Large ribosomal subunit protein uL10 (196 aa).

Positions 163-196 (GAPAAAEAPAAEEAPAAEAAETEAPAEAAATEEN) are disordered. Positions 164 to 196 (APAAAEAPAAEEAPAAEAAETEAPAEAAATEEN) are enriched in low complexity.

This sequence belongs to the universal ribosomal protein uL10 family. As to quaternary structure, part of the ribosomal stalk of the 50S ribosomal subunit. The N-terminus interacts with L11 and the large rRNA to form the base of the stalk. The C-terminus forms an elongated spine to which L12 dimers bind in a sequential fashion forming a multimeric L10(L12)X complex.

Functionally, forms part of the ribosomal stalk, playing a central role in the interaction of the ribosome with GTP-bound translation factors. The chain is Large ribosomal subunit protein uL10 from Arthrobacter sp. (strain FB24).